The primary structure comprises 148 residues: Large ribosomal subunit protein uL15 (148 aa).

The segment at 1–61 (MKINDLKPAP…GGQMPLQRRV (61 aa)) is disordered.

This sequence belongs to the universal ribosomal protein uL15 family. In terms of assembly, part of the 50S ribosomal subunit.

In terms of biological role, binds to the 23S rRNA. This chain is Large ribosomal subunit protein uL15, found in Thermodesulfovibrio yellowstonii (strain ATCC 51303 / DSM 11347 / YP87).